The following is a 227-amino-acid chain: Protein CAP22 (227 aa).

N-linked (GlcNAc...) asparagine glycans are attached at residues Asn-55 and Asn-72. Residues 143 to 162 (TTIGGGATPAPTSERSRTSD) are disordered.

It localises to the secreted. It is found in the cell wall. This is Protein CAP22 (CAP22) from Colletotrichum gloeosporioides (Anthracnose fungus).